The primary structure comprises 224 residues: Response regulator protein GraR (224 aa).

The region spanning 2 to 115 (QILLVEDDNT…VLIAKLQAIY (114 aa)) is the Response regulatory domain. 4-aspartylphosphate is present on Asp51. Residues 126–224 (KRTLTWQDAV…KVGKGYMAHE (99 aa)) constitute a DNA-binding region (ompR/PhoB-type). Thr128, Thr130, and Thr149 each carry phosphothreonine.

Interacts with GraX. In terms of processing, phosphorylated by GraS. Phosphorylated by Stk1; phosphorylation increases the DNA-binding activity of GraR.

It localises to the cytoplasm. Functionally, member of the two-component regulatory system GraR/GraS involved in resistance against cationic antimicrobial peptides (CAMPs). Upon phosphorylation by GraS, functions as a transcription regulator by direct binding to promoter regions of target genes such as adhesins, exoproteins, transporters, toxins, and proteins involved in cell wall synthesis. Down-regulates the expression of many genes involved in RNA and amino acid synthesis or glycolysis. In Staphylococcus aureus (strain Mu50 / ATCC 700699), this protein is Response regulator protein GraR (graR).